We begin with the raw amino-acid sequence, 564 residues long: Juvenile hormone esterase (564 aa).

Positions 1 to 19 are cleaved as a signal peptide; that stretch reads MTSHVLALAFLLHACTALA. Asn81 carries an N-linked (GlcNAc...) asparagine glycan. Cys89 and Cys109 are disulfide-bonded. N-linked (GlcNAc...) asparagine glycosylation occurs at Asn180. Ser220 serves as the catalytic Acyl-ester intermediate. Glu351 serves as the catalytic Charge relay system. The N-linked (GlcNAc...) asparagine glycan is linked to Asn402. The active-site Charge relay system is the His465. N-linked (GlcNAc...) asparagine glycosylation occurs at Asn515.

It belongs to the type-B carboxylesterase/lipase family.

It carries out the reaction juvenile hormone I + H2O = juvenile hormone I carboxylate + methanol + H(+). The enzyme catalyses juvenile hormone III + H2O = juvenile hormone III carboxylate + methanol + H(+). Its function is as follows. JH esterase plays a crucial role in the decrease of JH activity in lepidopteran insects, by hydrolyzing the methyl ester of JH. It is also involved in the transport of JH. In Heliothis virescens (Tobacco budworm moth), this protein is Juvenile hormone esterase.